The sequence spans 529 residues: Delayed-rectifier potassium channel regulatory subunit KCNS1 (529 aa).

At 1 to 217 (MLMLLVRGTH…LTMENPGYSL (217 aa)) the chain is on the cytoplasmic side. Residues 218-239 (PSKLFSCVSISVVLASIAAMCI) traverse the membrane as a helical segment. The Extracellular segment spans residues 240–270 (HSLPEYQAREAAAAVAAVAAGRSPEGVRDDP). A helical membrane pass occupies residues 271–293 (VLRRLEYFCIAWFSFEVSSRLLL). The Cytoplasmic segment spans residues 294 to 304 (APSTRNFFCHP). A helical transmembrane segment spans residues 305-322 (LNLIDIVSVLPFYLTLLA). The Extracellular portion of the chain corresponds to 323–340 (GVALGDQGGTGGKELGHL). The helical; Voltage-sensor transmembrane segment at 341–361 (GKVVQVFRLMRIFRVLKLARH) threads the bilayer. The Cytoplasmic segment spans residues 362 to 376 (STGLRSLGATLKHSY). The chain crosses the membrane as a helical span at residues 377-398 (REVGILLLYLAVGVSVFSGVAY). The Extracellular portion of the chain corresponds to 399-411 (TAEKEEDVGFNTI). Positions 412 to 423 (PACWWWGTVSMT) form an intramembrane region, helical. Residues 424 to 429 (TVGYGD) carry the Selectivity filter motif. An intramembrane segment occupies 424 to 431 (TVGYGDVV). Topologically, residues 432 to 438 (PVTVAGK) are extracellular. The helical transmembrane segment at 439–467 (LAASGCILGGILVVALPITIIFNKFSHFY) threads the bilayer. At 468 to 529 (RRQKALEAAV…PSEPPHPQMY (62 aa)) the chain is on the cytoplasmic side. Positions 494–529 (GVSEASLETSRETSQEGRSADLETQAPSEPPHPQMY) are disordered. Residues 502-514 (TSRETSQEGRSAD) are compositionally biased toward basic and acidic residues.

This sequence belongs to the potassium channel family. S (TC 1.A.1.2) subfamily. Kv9.1/KCNS1 sub-subfamily. Heterotetramer with KCNB1. Heterotetramer with KCNB2. Does not form homomultimers.

It localises to the cell membrane. Potassium channel regulatory subunit that modulate the delayed rectifier voltage-gated potassium channel activity of KCNB1 and KCNB2 by altering their kinetics, expression levels, and shifting the half-inactivation potential to more polarized values. While it does not form functional channels on its own, it can form functional heterotetrameric channels with KCNB1 and KCNB2. Each regulatory subunit has unique regulatory properties that can lead to extensive inhibition, significant changes in kinetics, and/or substantial shifts in the voltage dependencies of the inactivation process. The chain is Delayed-rectifier potassium channel regulatory subunit KCNS1 from Macaca mulatta (Rhesus macaque).